A 717-amino-acid chain; its full sequence is Protein Teyrha-meyrha (717 aa).

Over residues 140-152 (FRTDSASPTCTSH) the composition is skewed to polar residues. Disordered regions lie at residues 140 to 214 (FRTD…SNPA), 229 to 270 (HLAA…APPV), 440 to 498 (KIPP…QPGK), 511 to 539 (SQKD…GEAP), 563 to 594 (DSCG…MDTA), and 624 to 717 (QRRQ…DTKA). Residues 195–214 (ATSSSASSSSSSSCSTSNPA) show a composition bias toward low complexity. The segment covering 235–263 (PHHHPHTHAHSHPHPLAHPHAHSHHHVGH) has biased composition (basic residues). The segment covering 442-451 (PPEDDAKSQE) has biased composition (basic and acidic residues). Positions 452–466 (EIETVDVESCNDEVP) are enriched in acidic residues. Polar residues predominate over residues 471–482 (ELATPSSGSSGT). The segment covering 513 to 522 (KDPHPDEHDV) has biased composition (basic and acidic residues). Low complexity-rich tracts occupy residues 523–533 (STNVTTASSSS) and 570–580 (NDTNSSSSTHN). A compositionally biased stretch (polar residues) spans 630-640 (QNVGSSRSLEN). Positions 667–686 (NNNNNNNNNNNNSNSNNNNN) are enriched in low complexity. The segment covering 687–704 (PSTKYAESMENSLSQLSS) has biased composition (polar residues).

In embryos, expressed specifically in M12 (at protein level).

It is found in the nucleus. Its function is as follows. Required for the correct synaptic targeting of motoneurons RP5 and V to muscle 12 (M12). May be involved in the negative regulation of Tl in M12. Involved in the correct patterning of veins in the proximal (costal) region of the wing blade. This chain is Protein Teyrha-meyrha, found in Drosophila melanogaster (Fruit fly).